A 117-amino-acid polypeptide reads, in one-letter code: Large ribosomal subunit protein bL20 (117 aa).

It belongs to the bacterial ribosomal protein bL20 family.

Binds directly to 23S ribosomal RNA and is necessary for the in vitro assembly process of the 50S ribosomal subunit. It is not involved in the protein synthesizing functions of that subunit. In Finegoldia magna (strain ATCC 29328 / DSM 20472 / WAL 2508) (Peptostreptococcus magnus), this protein is Large ribosomal subunit protein bL20.